The following is a 131-amino-acid chain: Small nuclear ribonucleoprotein SmD3b (131 aa).

The 73-residue stretch at 7-79 folds into the Sm domain; that stretch reads IPVKLLHEAS…VRFMVIPDIL (73 aa). The disordered stretch occupies residues 96-131; it reads SSSLGVGRGRGAMRGKPAAGPGRGTGGRGAVPPVRR.

Belongs to the snRNP core protein family. As to expression, expressed in young seedlings, roots, leaves, flowers and immature siliques.

The protein localises to the cytoplasm. It is found in the cytosol. The protein resides in the nucleus. In terms of biological role, core component of the spliceosomal U1, U2, U4 and U5 small nuclear ribonucleoproteins (snRNPs), the building blocks of the spliceosome. May play a major role in the splicing of cellular pre-mRNAs. Required for normal plant development. This chain is Small nuclear ribonucleoprotein SmD3b, found in Arabidopsis thaliana (Mouse-ear cress).